The chain runs to 382 residues: Mannitol-1-phosphate 5-dehydrogenase (382 aa).

Residue 3-14 (AVHFGAGNIGRG) participates in NAD(+) binding.

Belongs to the mannitol dehydrogenase family.

It carries out the reaction D-mannitol 1-phosphate + NAD(+) = beta-D-fructose 6-phosphate + NADH + H(+). The protein is Mannitol-1-phosphate 5-dehydrogenase of Aliivibrio salmonicida (strain LFI1238) (Vibrio salmonicida (strain LFI1238)).